Consider the following 197-residue polypeptide: Probable chorismate pyruvate-lyase (197 aa).

Residues R77, L115, and E176 each coordinate substrate.

This sequence belongs to the UbiC family.

It localises to the cytoplasm. It catalyses the reaction chorismate = 4-hydroxybenzoate + pyruvate. The protein operates within cofactor biosynthesis; ubiquinone biosynthesis. Removes the pyruvyl group from chorismate, with concomitant aromatization of the ring, to provide 4-hydroxybenzoate (4HB) for the ubiquinone pathway. The sequence is that of Probable chorismate pyruvate-lyase from Burkholderia ambifaria (strain ATCC BAA-244 / DSM 16087 / CCUG 44356 / LMG 19182 / AMMD) (Burkholderia cepacia (strain AMMD)).